Reading from the N-terminus, the 274-residue chain is 3-methyl-2-oxobutanoate hydroxymethyltransferase (274 aa).

Residues aspartate 46 and aspartate 85 each coordinate Mg(2+). 3-methyl-2-oxobutanoate-binding positions include 46-47, aspartate 85, and lysine 115; that span reads DS. Mg(2+) is bound at residue glutamate 117. The active-site Proton acceptor is the glutamate 184.

Belongs to the PanB family. As to quaternary structure, homodecamer; pentamer of dimers. It depends on Mg(2+) as a cofactor.

It localises to the cytoplasm. It catalyses the reaction 3-methyl-2-oxobutanoate + (6R)-5,10-methylene-5,6,7,8-tetrahydrofolate + H2O = 2-dehydropantoate + (6S)-5,6,7,8-tetrahydrofolate. It functions in the pathway cofactor biosynthesis; coenzyme A biosynthesis. In terms of biological role, catalyzes the reversible reaction in which hydroxymethyl group from 5,10-methylenetetrahydrofolate is transferred onto alpha-ketoisovalerate to form ketopantoate. The chain is 3-methyl-2-oxobutanoate hydroxymethyltransferase from Halobacterium salinarum (strain ATCC 29341 / DSM 671 / R1).